The primary structure comprises 1358 residues: Retrotransposon-like protein 1 (1358 aa).

2 disordered regions span residues 1-159 (MIEP…TEHS) and 563-616 (ADVF…TAPW). Residues 19–30 (SSKQMESSEGSS) are compositionally biased toward low complexity. Over residues 65–79 (EMEELPTDLLQDMEE) the composition is skewed to acidic residues. Over residues 131-149 (AREEQEAHTDLKESGREET) the composition is skewed to basic and acidic residues. Over residues 583-592 (GSDDLSESEP) the composition is skewed to acidic residues. Helical transmembrane passes span 1083–1099 (LLYW…LVLL) and 1126–1146 (LILD…TQLL). Disordered stretches follow at residues 1250–1283 (DGLQ…PRHL) and 1338–1358 (QPRE…ANLD). Over residues 1267 to 1276 (APPSHTAATH) the composition is skewed to low complexity. The span at 1338-1347 (QPREQARLEE) shows a compositional bias: basic and acidic residues. Acidic residues predominate over residues 1348 to 1358 (LPDEDEDANLD).

The protein localises to the membrane. Plays an essential role in capillaries endothelial cells for the maintenance of feto-maternal interface and for development of the placenta. The protein is Retrotransposon-like protein 1 (RTL1) of Homo sapiens (Human).